The chain runs to 682 residues: Probable xyloglucan glycosyltransferase 6 (682 aa).

A run of 2 helical transmembrane segments spans residues 109 to 129 and 173 to 193; these read LIKG…AAYF and IVLF…CFWI. Aspartate 260 is a catalytic residue. Substrate-binding residues include aspartate 319 and aspartate 321. Aspartate 413 is a catalytic residue. 2 helical membrane-spanning segments follow: residues 491-511 and 516-536; these read LILP…TMFF and LPSW…IIPA. Serine 608 carries the phosphoserine modification. The next 2 helical transmembrane spans lie at 632–651 and 657–677; these read LYRT…VRSL and IHFY…LDLI.

It belongs to the glycosyltransferase 2 family. Plant cellulose synthase-like C subfamily. Homodimer. In terms of tissue distribution, mainly expressed in flowers and seeds, and, to a lower extent, in seedlings, roots, leaves and stems.

It is found in the golgi apparatus membrane. In terms of biological role, probable beta-1,4-glucan synthase rather involved in the synthesis of the xyloglucan backbone than cellulose. Seems to work simultaneously with xyloglucan 6-xylosyltransferase. Xyloglucan is a noncellulosic polysaccharides of plant cell wall and consists of a glucan backbone substituted by xylose, galactose and fucose. The chain is Probable xyloglucan glycosyltransferase 6 from Arabidopsis thaliana (Mouse-ear cress).